The chain runs to 4924 residues: Hydroxamate-type ferrichrome siderophore peptide synthetase (4924 aa).

4 consecutive Carrier domains span residues 715–791 (NQSE…ILLK), 2172–2246 (DGFQ…KRRR), 3254–3328 (NVVE…NTQT), and 4402–4478 (IHLN…QYEK). O-(pantetheine 4'-phosphoryl)serine occurs at positions 752, 2206, 3288, and 4439.

It belongs to the ATP-dependent AMP-binding enzyme family.

Its subcellular location is the cytoplasm. Functionally, involved in intracellular and extracellular ferrichrome siderophore biosynthesis. The polypeptide is Hydroxamate-type ferrichrome siderophore peptide synthetase (sib1) (Schizosaccharomyces pombe (strain 972 / ATCC 24843) (Fission yeast)).